The chain runs to 711 residues: C-Jun-amino-terminal kinase-interacting protein 1 (711 aa).

The disordered stretch occupies residues 1-27; that stretch reads MAERESGGLGGGAASPPAASPFLGLHI. A compositionally biased stretch (low complexity) spans 14–25; sequence ASPPAASPFLGL. 3 positions are modified to phosphoserine: S15, S29, and S40. The disordered stretch occupies residues 78–371; the sequence is AGGGGAGSRL…PPRASLSSDT (294 aa). Residue T103 is modified to Phosphothreonine; by MAPK8, MAPK9 and MAPK10. Residues 105 to 116 show a composition bias toward acidic residues; that stretch reads GAEDDEEDDDEE. A JNK-binding domain (JBD) region spans residues 127-285; that stretch reads PKAESGQEPA…EATEEIYLTP (159 aa). The span at 139–149 shows a compositional bias: low complexity; sequence GQGQSQGQSQG. S152 carries the post-translational modification Phosphoserine. Residues 157 to 176 form a minimal inhibitory domain (MID) region; sequence RPKRPTTLNLFPQVPRSQDT. Residues 162 to 182 are compositionally biased toward polar residues; sequence TTLNLFPQVPRSQDTLNNNSL. S181, S187, S193, S195, and S196 each carry phosphoserine. Residues 194–204 are compositionally biased toward polar residues; it reads RSSSPLKTGEQ. The residue at position 205 (T205) is a Phosphothreonine; by MAPK8, MAPK9 and MAPK10. Phosphoserine is present on S214. A compositionally biased stretch (polar residues) spans 228-244; sequence DRGTSTDSPCRRSTATQ. Residues 267-277 are compositionally biased toward basic and acidic residues; sequence IHYQADVRLEA. The interaction with MAP3K7 stretch occupies residues 283-471; it reads LTPVQRPPDA…NVFMSGRSRS (189 aa). Phosphoserine is present on residues S311, S328, S330, S340, S355, S366, S369, S407, and S409. 2 short sequence motifs (D-box) span residues 353 to 360 and 364 to 372; these read RGSLGEPP and RASLSSDTS. T411 carries the post-translational modification Phosphothreonine. Residues 429-451 form a disordered region; that stretch reads EEYEEAPRPQPPACLSEDSTPDE. A phosphoserine mark is found at S444 and S447. Phosphothreonine is present on T448. Residues S469, S471, S472, and S473 each carry the phosphoserine modification. The tract at residues 471 to 660 is interaction with VRK2; sequence SSSAESFGLF…PKNNKYFGFI (190 aa). The 62-residue stretch at 488–549 folds into the SH3 domain; sequence EQEQTHRAIF…PAYYAIEVTK (62 aa). One can recognise a PID domain in the interval 561 to 700; sequence SDWVDQFRVK…FQQFYKQFVE (140 aa).

Belongs to the JIP scaffold family. In terms of assembly, forms homo- or heterooligomeric complexes. Binds specific components of the JNK signaling pathway namely, MAPK8/JNK1, MAPK9/JNK2, MAPK10/JNK3, MAP2K7/MKK7, MAP3K11/MLK3 and DLK1. Also binds the proline-rich domain-containing splice variant of apolipoprotein E receptor 2 (ApoER2). Interacts, via the PID domain, with ARHGEF28. Binds the cytoplasmic tails of LRP1 and LRP2 (Megalin). Binds the TPR motif-containing C-terminal of KNS2, then the pre-assembled MAPK8IP1 scaffolding complexes are transported as a cargo of kinesin, to the required subcellular location. Interacts with the cytoplasmic domain of APP. Interacts with DCLK2. Interacts with MAP3K7/TAK1. Interacts with isoform 1 and isoform 2 of VRK2. Found in a complex with SH3RF1, RAC1, MAP3K11/MLK3, MAP2K7/MKK7 and MAPK8/JNK1. Found in a complex with SH3RF1, RAC2, MAP3K7/TAK1, MAP2K7/MKK7, MAPK8/JNK1 and MAPK9/JNK2. Interacts with SH3RF2. Post-translationally, phosphorylated by MAPK8, MAPK9 and MAPK10. Phosphorylation on Thr-103 is also necessary for the dissociation and activation of MAP3K12. Phosphorylated by isoform 1 and isoform 2 of VRK2. Hyperphosphorylated during mitosis following activation of stress-activated and MAP kinases. In terms of processing, ubiquitinated. Two preliminary events are required to prime for ubiquitination; phosphorylation and an increased in intracellular calcium concentration. Then, the calcium influx initiates ubiquitination and degradation by the ubiquitin-proteasome pathway. In terms of tissue distribution, highly expressed in brain. Expressed in neurons, localizing to neurite tips in differentiating cells. Also expressed in the pancreas, testis and prostate. Low levels in heart, ovary and small intestine. Decreased levels in pancreatic beta cells sensitize cells to IL-1-beta-induced apoptosis.

The protein resides in the cytoplasm. The protein localises to the perinuclear region. It is found in the nucleus. It localises to the endoplasmic reticulum membrane. Its subcellular location is the mitochondrion membrane. In terms of biological role, the JNK-interacting protein (JIP) group of scaffold proteins selectively mediates JNK signaling by aggregating specific components of the MAPK cascade to form a functional JNK signaling module. Required for JNK activation in response to excitotoxic stress. Cytoplasmic MAPK8IP1 causes inhibition of JNK-regulated activity by retaining JNK in the cytoplasm and inhibiting JNK phosphorylation of c-Jun. May also participate in ApoER2-specific reelin signaling. Directly, or indirectly, regulates GLUT2 gene expression and beta-cell function. Appears to have a role in cell signaling in mature and developing nerve terminals. May function as a regulator of vesicle transport, through interactions with the JNK-signaling components and motor proteins. Functions as an anti-apoptotic protein and whose level seems to influence the beta-cell death or survival response. Acts as a scaffold protein that coordinates with SH3RF1 in organizing different components of the JNK pathway, including RAC1 or RAC2, MAP3K11/MLK3 or MAP3K7/TAK1, MAP2K7/MKK7, MAPK8/JNK1 and/or MAPK9/JNK2 into a functional multiprotein complex to ensure the effective activation of the JNK signaling pathway. Regulates the activation of MAPK8/JNK1 and differentiation of CD8(+) T-cells. This is C-Jun-amino-terminal kinase-interacting protein 1 (MAPK8IP1) from Homo sapiens (Human).